A 237-amino-acid chain; its full sequence is dTDP-3-amino-3,4,6-trideoxy-alpha-D-glucopyranose N,N-dimethyltransferase (237 aa).

Positions 14 and 17 each coordinate substrate. S-adenosyl-L-methionine-binding positions include tyrosine 21, alanine 46, glutamate 67, 89–90, and methionine 105; that span reads DM. Residues 145-147, serine 152, 165-169, and arginine 229 each bind substrate; these read TFA and RVSHS.

This sequence belongs to the methyltransferase TylM1/DesVI family. Homodimer.

It catalyses the reaction dTDP-3-amino-3,4,6-trideoxy-alpha-D-glucose + 2 S-adenosyl-L-methionine = dTDP-alpha-D-desosamine + 2 S-adenosyl-L-homocysteine + 2 H(+). It participates in antibiotic biosynthesis. Functionally, S-adenosyl-L-methionine-dependent methyltransferase involved in the biosynthesis of desosamine, found in certain macrolide antibiotics such as erthyromycin, azithromycin, clarithromycin, and methymycin. Catalyzes the last step in the biosynthesis of dTDP-desosamine, i.e. the N,N-dimethylation of the 3-amino group of dTDP-3-amino-3,4,6-trideoxy-alpha-D-glucose. The chain is dTDP-3-amino-3,4,6-trideoxy-alpha-D-glucopyranose N,N-dimethyltransferase from Streptomyces venezuelae.